Reading from the N-terminus, the 437-residue chain is MKVEEILEKALELVIPDEEEVRKGREAEEELRRRLDELGVEYVFVGSYARNTWLKGSLEIDVFLLFPEEFSKEELRERGLEIGKAVLDSYEIRYAEHPYVHGVVKGVEVDVVPCYKLKEPKNIKSAVDRTPFHHKWLEGRIKGKENEVRLLKGFLKANGIYGAEYKVRGFSGYLCELLIVFYGSFLETVKNARRWTRRTVIDVAKGEVRKGEEFFVVDPVDEKRNVAANLSLDNLARFVHLCREFMEAPSLGFFKPKHPLEIEPERLRKIVEERGTAVFAVKFRKPDIVDDNLYPQLERASRKIFEFLERENFMPLRSAFKASEEFCYLLFECQIKEISRVFRRMGPQFEDERNVKKFLSRNRAFRPFIENGRWWAFEMRKFTTPEEGVRSYASTHWHTLGKNVGESIREYFEIISGEKLFKEPVTAELCEMMGVKD.

ATP is bound by residues serine 47 and arginine 50. Positions 47 and 50 each coordinate CTP. Residues glutamate 59, aspartate 61, and aspartate 110 each coordinate Mg(2+). ATP-binding residues include histidine 133, lysine 152, and tyrosine 161. CTP is bound by residues histidine 133, lysine 152, and tyrosine 161.

The protein belongs to the tRNA nucleotidyltransferase/poly(A) polymerase family. Archaeal CCA-adding enzyme subfamily. In terms of assembly, homodimer. Requires Mg(2+) as cofactor.

It carries out the reaction a tRNA precursor + 2 CTP + ATP = a tRNA with a 3' CCA end + 3 diphosphate. The enzyme catalyses a tRNA with a 3' CCA end + 2 CTP + ATP = a tRNA with a 3' CCACCA end + 3 diphosphate. In terms of biological role, catalyzes the addition and repair of the essential 3'-terminal CCA sequence in tRNAs without using a nucleic acid template. Adds these three nucleotides in the order of C, C, and A to the tRNA nucleotide-73, using CTP and ATP as substrates and producing inorganic pyrophosphate. tRNA 3'-terminal CCA addition is required both for tRNA processing and repair. Also involved in tRNA surveillance by mediating tandem CCA addition to generate a CCACCA at the 3' terminus of unstable tRNAs. While stable tRNAs receive only 3'-terminal CCA, unstable tRNAs are marked with CCACCA and rapidly degraded. The structural flexibility of RNA controls the choice between CCA versus CCACCA addition: following the first CCA addition cycle, nucleotide-binding to the active site triggers a clockwise screw motion, producing torque on the RNA. This ejects stable RNAs, whereas unstable RNAs are refolded while bound to the enzyme and subjected to a second CCA catalytic cycle. This chain is CCA-adding enzyme, found in Archaeoglobus fulgidus (strain ATCC 49558 / DSM 4304 / JCM 9628 / NBRC 100126 / VC-16).